A 260-amino-acid chain; its full sequence is uncharacterized protein (260 aa).

The stretch at 1–38 (MNWTREIEQYKQVVASYKLKMKRMEMKISDISEEKRQS) forms a coiled coil.

This is an uncharacterized protein from Caenorhabditis elegans.